The following is a 292-amino-acid chain: Glutathione S-transferase L2, chloroplastic (292 aa).

Residues 1 to 56 (MSVGLKVSAFLHPTLALSSRDVSLSSSSSSLYLDRKILRPGSGRRWCKSRRTEPIL) constitute a chloroplast transit peptide. In terms of domain architecture, GST N-terminal spans 79–160 (GSTRLYISYT…YIDTNFEGPS (82 aa)). Residues 89–90 (CP), 117–118 (NR), 131–132 (KV), and 144–145 (ES) contribute to the glutathione site. The GST C-terminal domain maps to 130-286 (NKVPALEHNN…ELVERYKRRV (157 aa)).

Belongs to the GST superfamily. Lambda family.

Its subcellular location is the plastid. It is found in the chloroplast. The catalysed reaction is RX + glutathione = an S-substituted glutathione + a halide anion + H(+). Catalyzes the glutathione-dependent reduction of S-glutathionylquercetin to quercetin. In vitro, possesses glutathione-dependent thiol transferase activity toward 2-hydroxyethyl disulfide (HED). The sequence is that of Glutathione S-transferase L2, chloroplastic (GSTL2) from Arabidopsis thaliana (Mouse-ear cress).